Consider the following 797-residue polypeptide: Ubiquitin carboxyl-terminal hydrolase 14 (797 aa).

Residues 156–266 form a UBP-type; degenerate zinc finger; it reads LISEHALTLQ…EHLAHFGIDF (111 aa). Zn(2+)-binding residues include cysteine 180, cysteine 183, cysteine 200, and histidine 213. A USP domain is found at 308-796; sequence TGLVNLGNSC…MGYVYFFQRL (489 aa). Residue cysteine 317 is the Nucleophile of the active site. UBA domains are found at residues 613–654 and 670–710; these read VANE…LLSH and DIDQ…VFNN. Histidine 758 serves as the catalytic Proton acceptor.

This sequence belongs to the peptidase C19 family. In terms of tissue distribution, constitutively and ubiquitously expressed (at protein level).

The catalysed reaction is Thiol-dependent hydrolysis of ester, thioester, amide, peptide and isopeptide bonds formed by the C-terminal Gly of ubiquitin (a 76-residue protein attached to proteins as an intracellular targeting signal).. Its function is as follows. Recognizes and hydrolyzes the peptide bond at the C-terminal Gly of ubiquitin. Involved in the processing of poly-ubiquitin precursors as well as that of ubiquitinated proteins. Involved in seed and embryo development. The chain is Ubiquitin carboxyl-terminal hydrolase 14 (UBP14) from Arabidopsis thaliana (Mouse-ear cress).